The primary structure comprises 251 residues: 5'-nucleotidase SurE (251 aa).

Residues D8, D9, S39, and N95 each contribute to the a divalent metal cation site.

Belongs to the SurE nucleotidase family. The cofactor is a divalent metal cation.

It is found in the cytoplasm. The catalysed reaction is a ribonucleoside 5'-phosphate + H2O = a ribonucleoside + phosphate. Functionally, nucleotidase that shows phosphatase activity on nucleoside 5'-monophosphates. This Clostridium botulinum (strain Alaska E43 / Type E3) protein is 5'-nucleotidase SurE.